We begin with the raw amino-acid sequence, 330 residues long: Phosphatidylglycerol--prolipoprotein diacylglyceryl transferase (330 aa).

The next 3 helical transmembrane spans lie at 22-42 (LPIRAYALLIILGIVAALVVG), 57-77 (YDIALWAVPFGLVGGRLYHLA), and 97-117 (IWDGGLGIWGAVALGCVGAWL). A 1,2-diacyl-sn-glycero-3-phospho-(1'-sn-glycerol) is bound at residue Arg145. 2 consecutive transmembrane segments (helical) span residues 193–213 (VVQPTFLYELIWNVLVFFALI) and 257–277 (INSFTSTFVFIGAVVYIILAP).

Belongs to the Lgt family.

It is found in the cell membrane. It carries out the reaction L-cysteinyl-[prolipoprotein] + a 1,2-diacyl-sn-glycero-3-phospho-(1'-sn-glycerol) = an S-1,2-diacyl-sn-glyceryl-L-cysteinyl-[prolipoprotein] + sn-glycerol 1-phosphate + H(+). The protein operates within protein modification; lipoprotein biosynthesis (diacylglyceryl transfer). Functionally, catalyzes the transfer of the diacylglyceryl group from phosphatidylglycerol to the sulfhydryl group of the N-terminal cysteine of a prolipoprotein, the first step in the formation of mature lipoproteins. The chain is Phosphatidylglycerol--prolipoprotein diacylglyceryl transferase from Mycobacterium leprae (strain Br4923).